A 166-amino-acid chain; its full sequence is Large ribosomal subunit protein uL10 (166 aa).

This sequence belongs to the universal ribosomal protein uL10 family. As to quaternary structure, part of the ribosomal stalk of the 50S ribosomal subunit. The N-terminus interacts with L11 and the large rRNA to form the base of the stalk. The C-terminus forms an elongated spine to which L12 dimers bind in a sequential fashion forming a multimeric L10(L12)X complex.

In terms of biological role, forms part of the ribosomal stalk, playing a central role in the interaction of the ribosome with GTP-bound translation factors. This chain is Large ribosomal subunit protein uL10, found in Staphylococcus aureus (strain JH1).